A 204-amino-acid chain; its full sequence is Salt stress root protein RS1 (204 aa).

Residues 128-204 (FVPKEEPKPE…AAPAAEPEKQ (77 aa)) are disordered. Residues 147 to 161 (TSREVAVEEEKKEEE) are compositionally biased toward basic and acidic residues. The span at 164 to 180 (PAEPAAAAAEAAAPSTE) shows a compositional bias: low complexity. Positions 182–192 (VEEKKEEEKPA) are enriched in basic and acidic residues. Low complexity predominate over residues 193 to 204 (EAAAPAAEPEKQ).

Belongs to the DREPP family.

This is Salt stress root protein RS1 from Oryza sativa subsp. indica (Rice).